Reading from the N-terminus, the 389-residue chain is Tryptophan synthase beta chain (389 aa).

Lys-84 bears the N6-(pyridoxal phosphate)lysine mark.

This sequence belongs to the TrpB family. Tetramer of two alpha and two beta chains. Pyridoxal 5'-phosphate serves as cofactor.

It carries out the reaction (1S,2R)-1-C-(indol-3-yl)glycerol 3-phosphate + L-serine = D-glyceraldehyde 3-phosphate + L-tryptophan + H2O. It participates in amino-acid biosynthesis; L-tryptophan biosynthesis; L-tryptophan from chorismate: step 5/5. Functionally, the beta subunit is responsible for the synthesis of L-tryptophan from indole and L-serine. The chain is Tryptophan synthase beta chain from Methanococcus aeolicus (strain ATCC BAA-1280 / DSM 17508 / OCM 812 / Nankai-3).